The following is a 484-amino-acid chain: MLPQKQGEEAIVSSFNETDQQEGVVGREEEVEDHSFSVKNFLWHGGSVWDAWFSCASNQVAQVLLTLPYSFSQLGMLSGILLQVFYGILGSWTAYLISVLYVEYRSRKEKENVNFKNHVIQWFEVLDGLLGPYWKALGLAFNCTFLLFGSVIQLIACASNIYYINDNLDKRTWTYIFGACCATTVFIPSFHNYRIWSFLGLGMTTYTAWYLTIASIVHGQAENVTHTGPKKLVLYFTGATNILYTFGGHAVTVEIMHAMWKPQKFKYIYLMATLYVFTLTIPSATAVYWAFGDELLNHSNAFSLLPKNGWRDGAVILMLIHQFITFGFACTPLYFVWEKVIGMHDTRSICLRALARLPVVIPIWFLAIIFPFFGPINSAVGALLVSFTVYIIPSAAHMLTYRKASARKNAAEKPPFFMPSWTAMYIFNAFIVIWVLVVGFGFGGWASMTNFIRQIDTFGLFAKCYQCKPPPVMAAAPPPHALHH.

Topologically, residues Met-1–Gln-59 are cytoplasmic. A helical membrane pass occupies residues Val-60 to Leu-77. Residues Ser-78 to Gly-79 lie on the Extracellular side of the membrane. The chain crosses the membrane as a helical span at residues Ile-80 to Leu-100. Topologically, residues Tyr-101–Lys-135 are cytoplasmic. The chain crosses the membrane as a helical span at residues Ala-136 to Ala-156. The Extracellular segment spans residues Cys-157–Thr-172. Residues Trp-173–Tyr-193 traverse the membrane as a helical segment. At Arg-194–Trp-196 the chain is on the cytoplasmic side. A helical membrane pass occupies residues Ser-197–Val-217. Residues His-218 to Leu-232 are Extracellular-facing. Residue Asn-223 is glycosylated (N-linked (GlcNAc...) asparagine). Residues Val-233–Val-253 traverse the membrane as a helical segment. The Cytoplasmic portion of the chain corresponds to Glu-254–Lys-266. A helical membrane pass occupies residues Tyr-267 to Val-287. Residues Tyr-288 to Ala-314 lie on the Extracellular side of the membrane. An N-linked (GlcNAc...) asparagine glycan is attached at Asn-297. The chain crosses the membrane as a helical span at residues Val-315 to Phe-335. At Val-336–Arg-356 the chain is on the cytoplasmic side. Residues Leu-357–Asn-377 form a helical membrane-spanning segment. A topological domain (extracellular) is located at residue Ser-378. The chain crosses the membrane as a helical span at residues Ala-379 to Leu-399. Over Thr-400–Tyr-425 the chain is Cytoplasmic. The chain crosses the membrane as a helical span at residues Ile-426 to Ala-446. Topologically, residues Ser-447–His-484 are extracellular.

The protein belongs to the amino acid/polyamine transporter 2 family. Amino acid/auxin permease (AAAP) (TC 2.A.18.1) subfamily. As to expression, shoots and roots of nodulating plants. Higher levels in roots, flowers and stems, lower in nodules, leaves, petioles and shoot apices.

The protein localises to the cell membrane. Its function is as follows. Carrier protein involved in proton-driven auxin influx. Mediates the formation of auxin gradient from developing leaves (site of auxin biosynthesis) to tips by contributing to the loading of auxin in vascular tissues and facilitating acropetal (base to tip) auxin transport within inner tissues of the root apex, and basipetal (tip to base) auxin transport within outer tissues of the root apex. May be involved in lateral roots and nodules formation. The polypeptide is Auxin transporter-like protein 2 (LAX2) (Medicago truncatula (Barrel medic)).